The sequence spans 346 residues: Dihydroorotase (346 aa).

Residues histidine 17 and histidine 19 each contribute to the Zn(2+) site. Residues 19-21 (HVR) and asparagine 45 contribute to the substrate site. Lysine 102, histidine 139, and histidine 177 together coordinate Zn(2+). Lysine 102 is modified (N6-carboxylysine). Substrate is bound at residue histidine 139. Leucine 222 contacts substrate. Aspartate 250 is a binding site for Zn(2+). Aspartate 250 is an active-site residue. Residues histidine 254 and alanine 266 each coordinate substrate.

The protein belongs to the metallo-dependent hydrolases superfamily. DHOase family. Class II DHOase subfamily. Homodimer. Zn(2+) serves as cofactor.

The catalysed reaction is (S)-dihydroorotate + H2O = N-carbamoyl-L-aspartate + H(+). The protein operates within pyrimidine metabolism; UMP biosynthesis via de novo pathway; (S)-dihydroorotate from bicarbonate: step 3/3. Catalyzes the reversible cyclization of carbamoyl aspartate to dihydroorotate. The protein is Dihydroorotase of Delftia acidovorans (strain DSM 14801 / SPH-1).